Here is a 144-residue protein sequence, read N- to C-terminus: Maximins 3/H14 (144 aa).

Positions 1-18 are cleaved as a signal peptide; the sequence is MNFKYIVAVSFLIASAYA. Propeptides lie at residues 19–43 and 73–122; these read RSVQNDEQSLSQRDVLEEESLREIR and RTAE…KKEK. At Ile143 the chain carries Isoleucine amide.

It belongs to the bombinin family. As to expression, expressed by the skin glands.

The protein resides in the secreted. Its function is as follows. Maximin-3 shows antibacterial activity against both Gram-positive and Gram-negative bacteria. It also shows antimicrobial activity against the fungus C.albicans, but not against A.flavus nor P.uticale. It has little hemolytic activity. It possess a significant cytotoxicity against tumor cell lines. It possess a significant anti-HIV activity. It shows high spermicidal activity. Maximin-H14 shows antimicrobial activity against bacteria and against the fungus C.albicans. Shows strong hemolytic activity. The protein is Maximins 3/H14 of Bombina maxima (Giant fire-bellied toad).